Reading from the N-terminus, the 403-residue chain is Chorismate synthase (403 aa).

Positions 40 and 46 each coordinate NADP(+). Residues 140-142, 261-262, glycine 305, 320-324, and arginine 346 contribute to the FMN site; these read RSS, QA, and KPIST.

It belongs to the chorismate synthase family. Homotetramer. Requires FMNH2 as cofactor.

It catalyses the reaction 5-O-(1-carboxyvinyl)-3-phosphoshikimate = chorismate + phosphate. It functions in the pathway metabolic intermediate biosynthesis; chorismate biosynthesis; chorismate from D-erythrose 4-phosphate and phosphoenolpyruvate: step 7/7. In terms of biological role, catalyzes the anti-1,4-elimination of the C-3 phosphate and the C-6 proR hydrogen from 5-enolpyruvylshikimate-3-phosphate (EPSP) to yield chorismate, which is the branch point compound that serves as the starting substrate for the three terminal pathways of aromatic amino acid biosynthesis. This reaction introduces a second double bond into the aromatic ring system. In Corynebacterium diphtheriae (strain ATCC 700971 / NCTC 13129 / Biotype gravis), this protein is Chorismate synthase.